Here is an 86-residue protein sequence, read N- to C-terminus: Toxin Aam3 (86 aa).

The first 19 residues, 1-19, serve as a signal peptide directing secretion; sequence MNYLVMISLALLFMIGVES. Residues 21 to 85 form the LCN-type CS-alpha/beta domain; sequence RDGYIAQPNN…PIKIIGQKCT (65 aa). Intrachain disulfides connect cysteine 31-cysteine 84, cysteine 35-cysteine 56, cysteine 42-cysteine 66, and cysteine 46-cysteine 68.

Belongs to the long (4 C-C) scorpion toxin superfamily. Sodium channel inhibitor family. Alpha subfamily. In terms of processing, the C-terminal basic residue is removed by a carboxypeptidase. As to expression, expressed by the venom gland.

It localises to the secreted. Its function is as follows. Alpha toxins bind voltage-independently at site-3 of sodium channels (Nav) and inhibit the inactivation of the activated channels, thereby blocking neuronal transmission. This chain is Toxin Aam3, found in Androctonus amoreuxi (African fattail scorpion).